The chain runs to 492 residues: Protein PAIR1 (492 aa).

The stretch at 166–186 (VDSVQSDVMQLNRAMKEASLD) forms a coiled coil. The Nuclear localization signal signature appears at 479–483 (KRRRR).

In terms of assembly, interacts with CRC1. In terms of tissue distribution, expressed in reproductive organs, but not in vegetative organs.

The protein resides in the nucleus. Its function is as follows. Involved in spore formation. Plays an essential role in the establishment of homologous chromosome pairing in early meiosis. The protein is Protein PAIR1 (PAIR1) of Oryza sativa subsp. japonica (Rice).